A 292-amino-acid polypeptide reads, in one-letter code: Pantothenate synthetase (292 aa).

30–37 provides a ligand contact to ATP; sequence MGFLHIGH. H37 serves as the catalytic Proton donor. Q61 contacts (R)-pantoate. Q61 contacts beta-alanine. Residue 147-150 coordinates ATP; it reads GEKD. Q153 serves as a coordination point for (R)-pantoate. Residues V176 and 184-187 contribute to the ATP site; that span reads CSSR.

This sequence belongs to the pantothenate synthetase family. Homodimer.

The protein localises to the cytoplasm. It catalyses the reaction (R)-pantoate + beta-alanine + ATP = (R)-pantothenate + AMP + diphosphate + H(+). It participates in cofactor biosynthesis; (R)-pantothenate biosynthesis; (R)-pantothenate from (R)-pantoate and beta-alanine: step 1/1. Catalyzes the condensation of pantoate with beta-alanine in an ATP-dependent reaction via a pantoyl-adenylate intermediate. This Agrobacterium fabrum (strain C58 / ATCC 33970) (Agrobacterium tumefaciens (strain C58)) protein is Pantothenate synthetase.